The following is a 130-amino-acid chain: Small ribosomal subunit protein uS9 (130 aa).

The protein belongs to the universal ribosomal protein uS9 family.

This is Small ribosomal subunit protein uS9 from Halorhodospira halophila (strain DSM 244 / SL1) (Ectothiorhodospira halophila (strain DSM 244 / SL1)).